A 511-amino-acid chain; its full sequence is Bifunctional purine biosynthesis protein PurH (511 aa).

The 145-residue stretch at methionine 1–valine 145 folds into the MGS-like domain.

The protein belongs to the PurH family.

The catalysed reaction is (6R)-10-formyltetrahydrofolate + 5-amino-1-(5-phospho-beta-D-ribosyl)imidazole-4-carboxamide = 5-formamido-1-(5-phospho-D-ribosyl)imidazole-4-carboxamide + (6S)-5,6,7,8-tetrahydrofolate. It carries out the reaction IMP + H2O = 5-formamido-1-(5-phospho-D-ribosyl)imidazole-4-carboxamide. It functions in the pathway purine metabolism; IMP biosynthesis via de novo pathway; 5-formamido-1-(5-phospho-D-ribosyl)imidazole-4-carboxamide from 5-amino-1-(5-phospho-D-ribosyl)imidazole-4-carboxamide (10-formyl THF route): step 1/1. The protein operates within purine metabolism; IMP biosynthesis via de novo pathway; IMP from 5-formamido-1-(5-phospho-D-ribosyl)imidazole-4-carboxamide: step 1/1. In Bacillus cereus (strain 03BB102), this protein is Bifunctional purine biosynthesis protein PurH.